We begin with the raw amino-acid sequence, 100 residues long: NADH-quinone oxidoreductase subunit K (100 aa).

Helical transmembrane passes span 4–24 (LTHG…GLVI), 28–48 (LLFM…AFVV), and 60–80 (IMYI…LALL).

This sequence belongs to the complex I subunit 4L family. In terms of assembly, NDH-1 is composed of 13 different subunits. Subunits NuoA, H, J, K, L, M, N constitute the membrane sector of the complex.

The protein resides in the cell inner membrane. It carries out the reaction a quinone + NADH + 5 H(+)(in) = a quinol + NAD(+) + 4 H(+)(out). In terms of biological role, NDH-1 shuttles electrons from NADH, via FMN and iron-sulfur (Fe-S) centers, to quinones in the respiratory chain. The immediate electron acceptor for the enzyme in this species is believed to be ubiquinone. Couples the redox reaction to proton translocation (for every two electrons transferred, four hydrogen ions are translocated across the cytoplasmic membrane), and thus conserves the redox energy in a proton gradient. This is NADH-quinone oxidoreductase subunit K from Klebsiella pneumoniae (strain 342).